A 296-amino-acid polypeptide reads, in one-letter code: ATP phosphoribosyltransferase (296 aa).

This sequence belongs to the ATP phosphoribosyltransferase family.

The protein resides in the cytoplasm. It catalyses the reaction 1-(5-phospho-beta-D-ribosyl)-ATP + diphosphate = 5-phospho-alpha-D-ribose 1-diphosphate + ATP. Its pathway is amino-acid biosynthesis; L-histidine biosynthesis; L-histidine from 5-phospho-alpha-D-ribose 1-diphosphate: step 1/9. Functionally, catalyzes the condensation of ATP and 5-phosphoribose 1-diphosphate to form N'-(5'-phosphoribosyl)-ATP (PR-ATP). Has a crucial role in the pathway because the rate of histidine biosynthesis seems to be controlled primarily by regulation of the enzymatic activity. The protein is ATP phosphoribosyltransferase (HIS1) of Yarrowia lipolytica (strain CLIB 122 / E 150) (Yeast).